Consider the following 293-residue polypeptide: Inner membrane ABC transporter permease protein YcjO (293 aa).

At 1–12 the chain is on the periplasmic side; sequence MNRLFSGRSDMP. The helical transmembrane segment at 13–33 threads the bilayer; sequence FALLLLAPSLLLLGGLVAWPM. The Cytoplasmic portion of the chain corresponds to 34–77; sequence VSNIEISFLRLPLNPNIESTFVGVSNYVRILSDPGFWHSLWMTV. One can recognise an ABC transmembrane type-1 domain in the interval 73 to 283; sequence LWMTVWYTAL…IIIFAVILLT (211 aa). Residues 78–98 traverse the membrane as a helical segment; sequence WYTALVVAGSTVLGLAVAMFF. Residues 99-110 are Periplasmic-facing; the sequence is NREFRLRKTARS. Residues 111–131 traverse the membrane as a helical segment; sequence LVILSYVTPSISLVFAWKYMF. The Cytoplasmic portion of the chain corresponds to 132 to 135; sequence NNGY. Residues 136–156 traverse the membrane as a helical segment; sequence GIVNYLGVDLLHLYEQAPLWF. Residues 157-162 lie on the Periplasmic side of the membrane; sequence DNPGSS. A helical membrane pass occupies residues 163–183; sequence FVLVVLFAIWRYFPYAFISFL. At 184–214 the chain is on the cytoplasmic side; the sequence is AILQTIDKSLYEAAEMDGANAWQRFRIVTLP. A helical transmembrane segment spans residues 215–235; sequence AIMPVLATVVTLRTIWMFYMF. At 236–261 the chain is on the periplasmic side; that stretch reads ADVYLLTTKVDILGVYLYKTAFAFND. The chain crosses the membrane as a helical span at residues 262-282; it reads LGKAAAISVVLFIIIFAVILL. Residues 283–293 lie on the Cytoplasmic side of the membrane; that stretch reads TRKRVNLNGNK.

Belongs to the binding-protein-dependent transport system permease family. MalFG subfamily.

The protein resides in the cell inner membrane. Its function is as follows. Probably part of the binding-protein-dependent transport system YcjNOP. Probably responsible for the translocation of the substrate across the membrane. The polypeptide is Inner membrane ABC transporter permease protein YcjO (ycjO) (Escherichia coli (strain K12)).